The primary structure comprises 456 residues: Outer membrane efflux protein BepC (456 aa).

Residues 1–28 (MRYTVFKACKELVAAAVLLSGTVLTGQA) form the signal peptide. Residues 312–341 (RTSAQIRQSKEQLGQARIEVDVVQDKVRQA) are a coiled coil.

This sequence belongs to the outer membrane factor (OMF) (TC 1.B.17) family. Probably part of a tripartite efflux pump, which is composed of an outer membrane efflux protein, an inner membrane protein and a protein that expands the periplasmic space. Could form a tripartite pump with BepD and BepE or with BepF and BepG.

It is found in the cell outer membrane. Involved in the efflux of toxic and relatively hydrophobic compounds. Influences survival inside the host. This chain is Outer membrane efflux protein BepC (bepC), found in Brucella suis biovar 1 (strain 1330).